The sequence spans 993 residues: Desmoglein-3 (993 aa).

The signal sequence occupies residues 1–23; the sequence is MTWLLFRTSGALAILMVLILVHG. A propeptide spanning residues 24–48 is cleaved from the precursor; the sequence is ELRIETKGQHGEDETAIQGRRRYKR. 4 Cadherin domains span residues 48-156, 157-266, 267-386, and 383-494; these read REWV…APVF, SQSI…FPMF, KESQ…HPAS, and HPAS…CPTV. Topologically, residues 49–617 are extracellular; the sequence is EWVKFAKPCR…GKRPSGRLGS (569 aa). N109 and N179 each carry an N-linked (GlcNAc...) asparagine glycan. 2 N-linked (GlcNAc...) asparagine glycosylation sites follow: N458 and N544. A helical transmembrane segment spans residues 618–638; sequence AAIGLLLLGLLLLLLAPLLLL. Residues 639 to 993 lie on the Cytoplasmic side of the membrane; it reads TCDYGVGPIG…CTEDPCSRLI (355 aa). The interval 641-713 is required for interaction with CTNND1 and localization at cell-cell junctions; the sequence is DYGVGPIGGV…NTYAGGTVVE (73 aa). Desmoglein repeat repeat units lie at residues 903-929 and 930-960; these read LSAS…MVTE and TYSA…ERVI.

Homodimer. Part of a complex that contains DSG3, PKP1, YAP1 and YWHAG; the complex is required for localization of DSG3 and YAP1 to the cell membrane in keratinocytes. Interacts with PKP2. Interacts with CTNND1; the interaction facilitates DSG3 localization and retention at cell-cell junctions. Interacts with CDH1; the interaction is required for CDH1 localization to developing adherens junctions. Interacts with RAC1; the interaction is required for DSG3 translocation to cell-cell junctions, organization of cortical F-actin bundles and actin anchoring at cell-cell junctions. Interacts with DSC3; the interaction may limit the interaction of DSC3 with p38MAPK family members and therefore repress p38MAPK signaling activation.

Its subcellular location is the cell membrane. It is found in the cell junction. It localises to the desmosome. The protein localises to the cytoplasm. The protein resides in the tight junction. A component of desmosome cell-cell junctions which are required for positive regulation of cellular adhesion. Required for adherens and desmosome junction assembly in response to mechanical force in keratinocytes. Required for desmosome-mediated cell-cell adhesion of cells surrounding the telogen hair club and the basal layer of the outer root sheath epithelium, consequently is essential for the anchoring of telogen hairs in the hair follicle. Required for the maintenance of the epithelial barrier via promoting desmosome-mediated intercellular attachment of suprabasal epithelium to basal cells. May play a role in the protein stability of the desmosome plaque components DSP, JUP, PKP1, PKP2 and PKP3. Required for YAP1 localization at the plasma membrane in keratinocytes in response to mechanical strain, via the formation of an interaction complex composed of DSG3, PKP1 and YWHAG. May also be involved in the positive regulation of YAP1 target gene transcription and as a result cell proliferation. Positively regulates cellular contractility and cell junction formation via organization of cortical F-actin bundles and anchoring of actin to tight junctions, in conjunction with RAC1. The cytoplasmic pool of DSG3 is required for the localization of CDH1 and CTNNB1 at developing adherens junctions, potentially via modulation of SRC activity. Inhibits keratinocyte migration via suppression of p38MAPK signaling, may therefore play a role in moderating wound healing. This is Desmoglein-3 (DSG3) from Canis lupus familiaris (Dog).